The sequence spans 775 residues: MATFINLEDSPMFQKQVCSLEGTADELKDRCQKLYKGVKKFMGTLGEASKGESAFAACLEEFGGGPDDPISLSIGGPVISKFINALRELASYKEFLCSQVEHVLLERLMNFISVDLQEAKESRHRFDKAAHSYDQSREKFVSLKKNTRGEIVAELEEDLENSKSTFEKSRFNLVNSLMTIEAKKKYEFLESISAIMDAHLRYFKLGYDLLNQLEPFIHQILTYAQQSKEQSKIEQDRLARRIQEFRTQSELDSQQLVANAESSGANGNRVGGNIPYKNTETSLTADKEVIKQGYLLKRSSSLRTDWKRKFFVLDSHGSMYYYRTNGNKSMGSHHHYSGSSDHNTGVFGRFRARHNRSGSLTEGSLGYNTIDLRTSLIKLDAEDMDLRLCFRIISPQKTYTLQAENGADRMDWVNKITKAIGTLLNSHFLQQSPVRYLDKDNSSSAPANAVVSGDQIRHNDSRQNIGDDVSTILRGLPGNNACAECNAPEPDWASLNLGVLLCIQCSGVHRNLGVHISKVRSLSLDVKVWEPTILDLFRNLGNVYCNSLWEGLLHLDDDCEDGSALSHASVSKPCPEDSFSVKEKYILGKYLEKALVIKDESEANLSAASRIWEAVQSRNIREIYRLIVTTGDVNIINTKFDDITDIDAYHHIDAAEKAVKKRHDPTVCQRIKESNEPRSCLQGCSLLHVACHIGDSVLLELLLQFGADLNIRDYHGRTPLHHCISSGNHKFAKILLRRGARPSIEDDGGLSVLERAMEMGAITDEELFLLLAECA.

One can recognise a BAR domain in the interval 2 to 226; sequence ATFINLEDSP…IHQILTYAQQ (225 aa). The 134-residue stretch at 288–421 folds into the PH domain; that stretch reads EVIKQGYLLK…WVNKITKAIG (134 aa). Residues 467–603 enclose the Arf-GAP domain; that stretch reads DDVSTILRGL…ALVIKDESEA (137 aa). The C4-type zinc finger occupies 482–505; sequence CAECNAPEPDWASLNLGVLLCIQC. ANK repeat units follow at residues 682 to 711 and 715 to 744; these read QGCS…DLNI and HGRT…RPSI.

As to expression, expressed in roots, hypocotyls, cotyledons, leaf and shoot apical meristems and siliques.

Its function is as follows. Probable GTPase-activating protein. The polypeptide is ADP-ribosylation factor GTPase-activating protein AGD4 (AGD4) (Arabidopsis thaliana (Mouse-ear cress)).